We begin with the raw amino-acid sequence, 915 residues long: Kinesin-like protein KIN-10A (915 aa).

Positions 1-16 are enriched in pro residues; sequence MAPPTPSPRPGPPPTP. 2 disordered regions span residues 1-28 and 34-53; these read MAPP…KTPA and HFPA…AGGT. In terms of domain architecture, Kinesin motor spans 56–391; that stretch reads PVEVIGRIRN…LEYGAKAKCI (336 aa). Residue 137–144 participates in ATP binding; sequence GPTGSGKS. The stretch at 426–517 forms a coiled coil; the sequence is NLQKENKLRE…QRLKEVEREK (92 aa). Residues 676–718 form a disordered region; sequence PAKKAFGDENNEPAKQTFGDENKQQPAKRVFGDENKDPSAWGA.

It belongs to the TRAFAC class myosin-kinesin ATPase superfamily. Kinesin family. KIN-10 subfamily.

This is Kinesin-like protein KIN-10A from Oryza sativa subsp. japonica (Rice).